A 289-amino-acid chain; its full sequence is Acetyl-coenzyme A carboxylase carboxyl transferase subunit beta 2 (289 aa).

The 265-residue stretch at valine 25–lysine 289 folds into the CoA carboxyltransferase N-terminal domain. 4 residues coordinate Zn(2+): cysteine 29, cysteine 32, cysteine 48, and cysteine 51. The C4-type zinc-finger motif lies at cysteine 29–cysteine 51.

It belongs to the AccD/PCCB family. Acetyl-CoA carboxylase is a heterohexamer composed of biotin carboxyl carrier protein (AccB), biotin carboxylase (AccC) and two subunits each of ACCase subunit alpha (AccA) and ACCase subunit beta (AccD). Requires Zn(2+) as cofactor.

It localises to the cytoplasm. It catalyses the reaction N(6)-carboxybiotinyl-L-lysyl-[protein] + acetyl-CoA = N(6)-biotinyl-L-lysyl-[protein] + malonyl-CoA. Its pathway is lipid metabolism; malonyl-CoA biosynthesis; malonyl-CoA from acetyl-CoA: step 1/1. Component of the acetyl coenzyme A carboxylase (ACC) complex. Biotin carboxylase (BC) catalyzes the carboxylation of biotin on its carrier protein (BCCP) and then the CO(2) group is transferred by the transcarboxylase to acetyl-CoA to form malonyl-CoA. The chain is Acetyl-coenzyme A carboxylase carboxyl transferase subunit beta 2 from Vibrio parahaemolyticus serotype O3:K6 (strain RIMD 2210633).